The primary structure comprises 702 residues: MARKTPIERYRNIGISAHIDAGKTTTTERILFYTGVTHKLGEVHDGAATTDWMEQEQERGITITSAAVTCFWKGMDMSYPEHRFNIIDTPGHVDFTIEVERSMRVLDGACMVYCAVGGVQPQSETVWRQANKYKVPRLAFVNKMDRTGANFFKVVDQIKTRLKGNPVPVVVPIGAEDNFKGVVDLLKMKAIIWDEASQGMKFEYTDIPAEVKETAEKWRENMVEAAAEASEELMNKYLDEGTLSEEDIKAGLRARTLAVEIQPMLCGTAFKNKGVQRMLDAVIDYLPSPVDIPDVEGTDPDDEEKKLARKADDGEKFSALAFKLMTDPFVGQLTFVRVYSGVLSKGDTVFNSVKGKKERIGRIVQMMANERIEVDEIRAGDIAACVGLKDVTTGETLSDVDNPIILERMVFPEPVIAQAVEPKSKADQEKMGIALSRLASEDPSFRVRTDEESGQTIIAGMGELHLEIIVDRMKREFNVEANVGKPQVAYRETVRKTVTDVDGKFVRQSGGKGQYGHVVFTLEPQEAGKGFEFVDEIKGGVVPREYIPAVQKGVEEALTSGVLAGYPVVDVKVRLTFGSYHDVDSSEQAFKMAAIFGFKEAARKANPVILEPMMAVEVETPEDYAGTVMGDLSSRRGMVQGMDDMVGGGKAIKAEVPLSEMFGYATQLRSMTQGRATYTMEFKHYAEAPRNVAEAIVAARAK.

Residues 8-290 (ERYRNIGISA…AVIDYLPSPV (283 aa)) enclose the tr-type G domain. GTP contacts are provided by residues 17-24 (AHIDAGKT), 88-92 (DTPGH), and 142-145 (NKMD).

Belongs to the TRAFAC class translation factor GTPase superfamily. Classic translation factor GTPase family. EF-G/EF-2 subfamily.

Its subcellular location is the cytoplasm. Functionally, catalyzes the GTP-dependent ribosomal translocation step during translation elongation. During this step, the ribosome changes from the pre-translocational (PRE) to the post-translocational (POST) state as the newly formed A-site-bound peptidyl-tRNA and P-site-bound deacylated tRNA move to the P and E sites, respectively. Catalyzes the coordinated movement of the two tRNA molecules, the mRNA and conformational changes in the ribosome. This Acidovorax sp. (strain JS42) protein is Elongation factor G.